A 322-amino-acid polypeptide reads, in one-letter code: Formimidoylglutamase (322 aa).

Mn(2+) is bound by residues histidine 130, aspartate 156, histidine 158, aspartate 160, cysteine 245, and aspartate 247.

The protein belongs to the arginase family. Mn(2+) serves as cofactor.

It catalyses the reaction N-formimidoyl-L-glutamate + H2O = formamide + L-glutamate. It participates in amino-acid degradation; L-histidine degradation into L-glutamate; L-glutamate from N-formimidoyl-L-glutamate (hydrolase route): step 1/1. Its function is as follows. Catalyzes the conversion of N-formimidoyl-L-glutamate to L-glutamate and formamide. The protein is Formimidoylglutamase of Lysinibacillus sphaericus (strain C3-41).